A 179-amino-acid chain; its full sequence is Stathmin-2 (179 aa).

Residues 1–26 (MAKTAMAYKEKMKELSMLSLICSCFY) are membrane attachment. Position 16 is a phosphoserine (Ser16). S-palmitoyl cysteine attachment occurs at residues Cys22 and Cys24. The SLD domain occupies 38–179 (DDMEVKQINK…NKELQVELSG (142 aa)). The regulatory/phosphorylation domain stretch occupies residues 39–96 (DMEVKQINKRASGQAFELILKPPSPISEAPRTLASPKKKDLSLEEIQKKLEAAEGRRK). Position 50 is a phosphoserine (Ser50). Phosphoserine; by MAPK8 is present on residues Ser62 and Ser73. Residues 75 to 179 (KKKDLSLEEI…NKELQVELSG (105 aa)) are a coiled coil. Ser80 and Ser97 each carry phosphoserine.

This sequence belongs to the stathmin family. As to quaternary structure, interacts with ITM2C. Interacts with MAPK8. Interacts with KIFBP. Interacts (via the N-terminal region) with CIB1 (via C-terminal region); the interaction is direct, occurs in a calcium-dependent manner and attenuates the neurite outgrowth inhibition of STMN2. In terms of processing, sumoylated. Phosphorylated by MAPK9 and MAPK10 in the developing brain cortex. Phosphorylated mostly by MAPK8. Post-translationally, N-terminal palmitoylation promotes specific anchoring to the cytosolic leaflet of Golgi membranes and subsequent vesicular trafficking along dendrites and axons. Neuronal Stathmins are substrates for palmitoyltransferases ZDHHC3, ZDHHC7 and ZDHHC15. As to expression, expressed in neurons (at protein level). Present in growth cones and abundant in developing neurons.

It is found in the cytoplasm. The protein resides in the perinuclear region. The protein localises to the cell projection. It localises to the growth cone. Its subcellular location is the axon. It is found in the membrane. The protein resides in the golgi apparatus. The protein localises to the endosome. It localises to the lamellipodium. Its function is as follows. Regulator of microtubule stability. When phosphorylated by MAPK8, stabilizes microtubules and consequently controls neurite length in cortical neurons. In the developing brain, negatively regulates the rate of exit from multipolar stage and retards radial migration from the ventricular zone. The sequence is that of Stathmin-2 (Stmn2) from Rattus norvegicus (Rat).